The sequence spans 32 residues: Beta-hexosaminidase (32 aa).

The region spanning 1 to 32 (GKSSSRPLGDATLGDLDFDIEVTQDYWDDLAR) is the GH18 domain. Glu21 acts as the Proton donor in catalysis.

The protein belongs to the glycosyl hydrolase 18 family. Chitinase class II subfamily.

The enzyme catalyses Hydrolysis of terminal non-reducing N-acetyl-D-hexosamine residues in N-acetyl-beta-D-hexosaminides.. Its activity is regulated as follows. Activity is decreased by HgCl(2) and maltose. Activity is stimulated by Na(2)SeO(4), BaCl(2), MgCl(2), chondroitin 6-sulfate and phenylmethylsulfonyl fluoride. Preferentially hydrolyzes pNP-GlcNAc, hydrolyzes pNP-GalNAc to a lesser extent. This is Beta-hexosaminidase from Palythoa caribaeorum (White encrusting zoanthid coral).